The following is a 196-amino-acid chain: Molybdopterin synthase catalytic subunit (196 aa).

Substrate-binding positions include 110–111 (HR), Lys126, and 133–135 (KKE). The segment at 142–196 (GGIWRANRDGAVGERVDEDEEKKKPDMGPHGPILRPSRPGERGHGPVVRNHQLGS) is disordered. Residues 147–168 (ANRDGAVGERVDEDEEKKKPDM) show a composition bias toward basic and acidic residues.

The protein belongs to the MoaE family. MOCS2B subfamily. Heterotetramer; composed of 2 small (MOCS2A) and 2 large (MOCS2B) subunits.

The protein localises to the cytoplasm. It catalyses the reaction 2 [molybdopterin-synthase sulfur-carrier protein]-C-terminal-Gly-aminoethanethioate + cyclic pyranopterin phosphate + H2O = molybdopterin + 2 [molybdopterin-synthase sulfur-carrier protein]-C-terminal Gly-Gly + 2 H(+). It functions in the pathway cofactor biosynthesis; molybdopterin biosynthesis. Catalytic subunit of the molybdopterin synthase complex, a complex that catalyzes the conversion of precursor Z into molybdopterin. Acts by mediating the incorporation of 2 sulfur atoms from thiocarboxylated MOCS2A into precursor Z to generate a dithiolene group. This Sclerotinia sclerotiorum (strain ATCC 18683 / 1980 / Ss-1) (White mold) protein is Molybdopterin synthase catalytic subunit.